The following is a 152-amino-acid chain: Transcriptional regulator MraZ (152 aa).

2 SpoVT-AbrB domains span residues 5–52 (ATLV…PLPE) and 81–124 (ASEC…DETT).

It belongs to the MraZ family. As to quaternary structure, forms oligomers.

It is found in the cytoplasm. The protein resides in the nucleoid. In terms of biological role, negatively regulates its own expression and that of the subsequent genes in the proximal part of the division and cell wall (dcw) gene cluster. Acts by binding directly to DNA. May also regulate the expression of genes outside the dcw cluster. The protein is Transcriptional regulator MraZ of Klebsiella pneumoniae subsp. pneumoniae (strain ATCC 700721 / MGH 78578).